We begin with the raw amino-acid sequence, 531 residues long: MPNISTESVNTTIAPSQPASIPKDTATLFNPAKPTAMPAQSSTDSVQPYHHKANHNQNRSVEQSSEVVSAASAKTTTATTNAPVNAAPKIGFVSLGCPKALVDSERIITELSRDGYQVASDYEGADLVVVNTCGFIESAVQESLDAIGEAISKNGKVIVTGCLGKEADKIREMHPAVLAVTGAHAYDDVIRAVALHVPKPDCGLDASYDPKIDLINEAGIKLTPSHYAYLKISEGCNHRCTFCIIPSLRGDLVSRPIDSVMNEALALKKAGVKELLIISQDTSAYGLDLKYKTSFWNGMPLKSKFYDLCQALNDLGIWVRLHYVYPYPHVDKVVELMGEKKLLPYLDIPFQHASHRILKAMKRPAHSENTLARIHAWREICPDIVIRSTFVVGFPGETEEDFQCLLDWLVEARLDRVGAFTYSEVEGAVANDLPNHVPEDVKQERYERLMTLQQDISAQKLQEKIGKTLMVLVDEIDREEGVAICRSYADAPEIDGHVYVDDIDAHVKVGQFLTVTIDDASEYDLFASYKG.

Polar residues-rich tracts occupy residues 1-19 (MPNI…SQPA) and 55-67 (HNQN…SSEV). The tract at residues 1–77 (MPNISTESVN…VSAASAKTTT (77 aa)) is disordered. Residues 68 to 77 (VSAASAKTTT) show a composition bias toward low complexity. Positions 88–198 (PKIGFVSLGC…VIRAVALHVP (111 aa)) constitute an MTTase N-terminal domain. [4Fe-4S] cluster contacts are provided by Cys97, Cys133, Cys162, Cys236, Cys240, and Cys243. In terms of domain architecture, Radical SAM core spans 222–459 (LTPSHYAYLK…MTLQQDISAQ (238 aa)). Residues 462–531 (QEKIGKTLMV…EYDLFASYKG (70 aa)) enclose the TRAM domain.

This sequence belongs to the methylthiotransferase family. RimO subfamily. Requires [4Fe-4S] cluster as cofactor.

Its subcellular location is the cytoplasm. The catalysed reaction is L-aspartate(89)-[ribosomal protein uS12]-hydrogen + (sulfur carrier)-SH + AH2 + 2 S-adenosyl-L-methionine = 3-methylsulfanyl-L-aspartate(89)-[ribosomal protein uS12]-hydrogen + (sulfur carrier)-H + 5'-deoxyadenosine + L-methionine + A + S-adenosyl-L-homocysteine + 2 H(+). In terms of biological role, catalyzes the methylthiolation of an aspartic acid residue of ribosomal protein uS12. The protein is Ribosomal protein uS12 methylthiotransferase RimO of Psychrobacter cryohalolentis (strain ATCC BAA-1226 / DSM 17306 / VKM B-2378 / K5).